A 235-amino-acid polypeptide reads, in one-letter code: Glial cell line-derived neurotrophic factor (235 aa).

The first 19 residues, 1–19 (MKLWDILATCLLLLSSVST), serve as a signal peptide directing secretion. Residues 20–87 (RPLFHKLQPS…DFIEATLGRL (68 aa)) constitute a propeptide that is removed on maturation. Disordered regions lie at residues 34–60 (VRSE…ASME) and 91–137 (SDVE…RVKG). Residues 119–128 (GERKRSRGRA) are compositionally biased toward basic residues. 3 disulfide bridges follow: Cys-142–Cys-203, Cys-169–Cys-232, and Cys-173–Cys-234. N-linked (GlcNAc...) asparagine glycans are attached at residues Asn-150 and Asn-186.

Belongs to the TGF-beta family. GDNF subfamily. In terms of assembly, homodimer; disulfide-linked. Interacts with GFRA1 coreceptor and RET: forms a 2:2:2 ternary complex composed of GDNF ligand, GFRA1 and RET receptor. As to expression, first expressed at 14 hours post-fertilization (hpf) in the ventral half of anterior somites and in intermediate mesoderm. Ventral somitic expression persists and extends more posteriorly over the next 12 hours. Expressed throughout the ventral trunk mesoderm and endoderm at 24 hpf. By 30 hpf, somitic expression ceases and by 36 hpf, expression becomes restricted to the endodermal cells forming the gut, with expression along the whole length of the developing gut tube at 72 hpf.

It localises to the secreted. Functionally, neurotrophic factor that enhances survival and morphological differentiation of dopaminergic neurons and increases their high-affinity dopamine uptake. Acts by binding to its coreceptor, GFRA1, leading to autophosphorylation and activation of the RET receptor. This Danio rerio (Zebrafish) protein is Glial cell line-derived neurotrophic factor.